Reading from the N-terminus, the 172-residue chain is NAD(P)H-quinone oxidoreductase subunit J (172 aa).

This sequence belongs to the complex I 30 kDa subunit family. NDH-1 can be composed of about 15 different subunits; different subcomplexes with different compositions have been identified which probably have different functions.

The protein localises to the cellular thylakoid membrane. It catalyses the reaction a plastoquinone + NADH + (n+1) H(+)(in) = a plastoquinol + NAD(+) + n H(+)(out). The enzyme catalyses a plastoquinone + NADPH + (n+1) H(+)(in) = a plastoquinol + NADP(+) + n H(+)(out). NDH-1 shuttles electrons from an unknown electron donor, via FMN and iron-sulfur (Fe-S) centers, to quinones in the respiratory and/or the photosynthetic chain. The immediate electron acceptor for the enzyme in this species is believed to be plastoquinone. Couples the redox reaction to proton translocation, and thus conserves the redox energy in a proton gradient. Cyanobacterial NDH-1 also plays a role in inorganic carbon-concentration. In Synechococcus sp. (strain ATCC 27144 / PCC 6301 / SAUG 1402/1) (Anacystis nidulans), this protein is NAD(P)H-quinone oxidoreductase subunit J.